The chain runs to 100 residues: MGSLLGLCLIVQIITGLFLAMHYVSDISSAFSSVAHICRDVNYGWLIRNFHANGASLFFICIYLHIARGLYYGSYLYMETWNIGVILLLLTMMTAFVGYV.

Transmembrane regions (helical) follow at residues 1 to 21 (MGSLLGLCLIVQIITGLFLAM), 45 to 66 (WLIRNFHANGASLFFICIYLHI), and 81 to 100 (WNIGVILLLLTMMTAFVGYV). The heme b site is built by H51 and H65.

Belongs to the cytochrome b family. As to quaternary structure, the cytochrome bc1 complex contains 3 respiratory subunits (MT-CYB, CYC1 and UQCRFS1), 2 core proteins (UQCRC1 and UQCRC2) and probably 6 low-molecular weight proteins. Requires heme b as cofactor.

It is found in the mitochondrion inner membrane. Component of the ubiquinol-cytochrome c reductase complex (complex III or cytochrome b-c1 complex) that is part of the mitochondrial respiratory chain. The b-c1 complex mediates electron transfer from ubiquinol to cytochrome c. Contributes to the generation of a proton gradient across the mitochondrial membrane that is then used for ATP synthesis. This is Cytochrome b (mt-cyb) from Polypterus sp. (Bichir).